A 1152-amino-acid polypeptide reads, in one-letter code: Syntaxin-binding protein 5 (1152 aa).

Residues 14-35 are disordered; sequence TAGSSSASQQQQQQQHPPGNRE. Residues 17–28 show a composition bias toward low complexity; the sequence is SSSASQQQQQQQ. WD repeat units lie at residues 62–95, 102–141, 146–182, 201–235, 241–273, 295–337, 345–379, 401–478, 506–620, and 634–696; these read SALAFDPVQKILAVGTQTGALRLFGRPGVECYCQ, VIQLQFLINEGALVSALADDTLHLWNLRQKRPAVLHSLKF, VTFCHLPFQSKWLYVGTERGNIHIVNVESFTLSGYVI, HISDNPMDEGKLLIGFESGTVVLWDLKSKKADYRY, IHSVAWHHEGKQFICSHSDGTLTIWNVRSPAKP, PILK…KSTA, IVDFLTLCETPYPNDFQEPYAVVVLLEKDLVLIDL, TCCE…YKLK, QIIS…ELVI, and TSLA…SGAG. Disordered stretches follow at residues 555 to 596 and 675 to 731; these read VDTP…GLRD and SNDP…QKVN. Phosphoserine is present on Ser-693. Low complexity predominate over residues 713 to 722; it reads SPTSGSSSPH. Residues Ser-724 and Ser-760 each carry the phosphoserine modification. Thr-763 is subject to Phosphothreonine. The residue at position 783 (Ser-783) is a Phosphoserine. The residue at position 785 (Thr-785) is a Phosphothreonine. Residue Ser-786 is modified to Phosphoserine. WD repeat units follow at residues 795–852, 861–935, 940–984, and 998–1021; these read ISAL…SGTI, RMAF…QSCA, ITET…LDVY, and CFANNGQALYLVSPTEIQRLTYSQ. The segment covering 883–893 has biased composition (basic and acidic residues); the sequence is NVAEEKDEKEK. Residues 883 to 907 form a disordered region; sequence NVAEEKDEKEKLKKRRPVSVSPSSS. Residues Ser-901 and Ser-903 each carry the phosphoserine modification. Residue Thr-1040 is modified to Phosphothreonine. Ser-1059 and Ser-1132 each carry phosphoserine. Residues 1087 to 1147 form the v-SNARE coiled-coil homology domain; the sequence is GIEGVKGAAS…HEMMLKYKDK (61 aa).

This sequence belongs to the WD repeat L(2)GL family. Part of a complex that contains STX1, STXBP5, SNAP25 and SYT1. Interacts with STX1A and STX4A via its v-SNARE homology domain. Part of a complex that contains STXBP5, STX4A and SNAP23. As to expression, detected in heart, spleen, lung, skeletal muscle, liver and kidney (at protein level). Detected in brain, particularly in the olfactory bulb and in hippocampus. Detected in the tenia tecta and in the piriform layer of the brain cortex.

The protein localises to the cytoplasm. It localises to the cell membrane. The protein resides in the membrane. Its function is as follows. Plays a regulatory role in calcium-dependent exocytosis and neurotransmitter release. Inhibits membrane fusion between transport vesicles and the plasma membrane. May modulate the assembly of trans-SNARE complexes between transport vesicles and the plasma membrane. Competes with STXBP1 for STX1 binding. Inhibits translocation of GLUT4 from intracellular vesicles to the plasma membrane. This is Syntaxin-binding protein 5 (Stxbp5) from Mus musculus (Mouse).